Reading from the N-terminus, the 316-residue chain is Apolipoprotein E (316 aa).

An N-terminal signal peptide occupies residues 1 to 18 (MKVLWVALVITLLAGCQA). 8 consecutive repeat copies span residues 79 to 100 (VLMD…GQLG), 101 to 122 (PIAQ…ARLA), 123 to 144 (SDME…AMMG), 145 to 166 (QTTD…KRLL), 167 to 188 (RDAE…EGSE), 189 to 210 (RSVS…VRAA), 211 to 232 (TVGT…QKLR), and 233 to 254 (GRME…EQLE). Residues 79 to 254 (VLMDETMKEV…HLEEMREQLE (176 aa)) form an 8 X 22 AA approximate tandem repeats region. The residue at position 142 (Met-142) is a Methionine sulfoxide. The tract at residues 157-167 (HLRKLRKRLLR) is LDL and other lipoprotein receptors binding. 161–164 (LRKR) contributes to the heparin binding site. The interval 209–289 (AATVGTLASQ…SWFEPLVEDM (81 aa)) is lipid-binding and lipoprotein association. 228–235 (HQKLRGRM) is a binding site for heparin. Residues 265-316 (SQMRLQAEAFQARLKSWFEPLVEDMQRQWAGLVEKVQLAMATSPTSAPIENS) form a homooligomerization region. Residues 277–289 (RLKSWFEPLVEDM) are specificity for association with VLDL.

Belongs to the apolipoprotein A1/A4/E family. As to quaternary structure, homotetramer. May interact with ABCA1; functionally associated with ABCA1 in the biogenesis of HDLs. May interact with APP/A4 amyloid-beta peptide; the interaction is extremely stable in vitro but its physiological significance is unclear. May interact with MAPT. May interact with MAP2. In the cerebrospinal fluid, interacts with secreted SORL1. Interacts with PMEL; this allows the loading of PMEL luminal fragment on ILVs to induce fibril nucleation. In terms of processing, APOE exists as multiple glycosylated and sialylated glycoforms within cells and in plasma. The extent of glycosylation and sialylation are tissue and context specific. Glycated in plasma VLDL. Post-translationally, phosphorylated by FAM20C in the extracellular medium.

The protein localises to the secreted. Its subcellular location is the extracellular space. It is found in the extracellular matrix. It localises to the extracellular vesicle. The protein resides in the endosome. The protein localises to the multivesicular body. In terms of biological role, APOE is an apolipoprotein, a protein associating with lipid particles, that mainly functions in lipoprotein-mediated lipid transport between organs via the plasma and interstitial fluids. APOE is a core component of plasma lipoproteins and is involved in their production, conversion and clearance. Apolipoproteins are amphipathic molecules that interact both with lipids of the lipoprotein particle core and the aqueous environment of the plasma. As such, APOE associates with chylomicrons, chylomicron remnants, very low density lipoproteins (VLDL) and intermediate density lipoproteins (IDL) but shows a preferential binding to high-density lipoproteins (HDL). It also binds a wide range of cellular receptors including the LDL receptor/LDLR and the very low-density lipoprotein receptor/VLDLR that mediate the cellular uptake of the APOE-containing lipoprotein particles. Finally, APOE also has a heparin-binding activity and binds heparan-sulfate proteoglycans on the surface of cells, a property that supports the capture and the receptor-mediated uptake of APOE-containing lipoproteins by cells. In Orcinus orca (Killer whale), this protein is Apolipoprotein E (APOE).